The sequence spans 154 residues: NADPH-dependent 7-cyano-7-deazaguanine reductase (154 aa).

A disordered region spans residues 1-24 (MPKTDVSGLSQLGTKVDLPQSPEE). The active-site Thioimide intermediate is C52. The Proton donor role is filled by D59. Residues 74-76 (VES) and 93-94 (HE) each bind substrate.

This sequence belongs to the GTP cyclohydrolase I family. QueF type 1 subfamily.

Its subcellular location is the cytoplasm. The catalysed reaction is 7-aminomethyl-7-carbaguanine + 2 NADP(+) = 7-cyano-7-deazaguanine + 2 NADPH + 3 H(+). It functions in the pathway tRNA modification; tRNA-queuosine biosynthesis. Catalyzes the NADPH-dependent reduction of 7-cyano-7-deazaguanine (preQ0) to 7-aminomethyl-7-deazaguanine (preQ1). This Sinorhizobium fredii (strain NBRC 101917 / NGR234) protein is NADPH-dependent 7-cyano-7-deazaguanine reductase.